Consider the following 313-residue polypeptide: uncharacterized protein (313 aa).

An NADP(+)-binding site is contributed by 29 to 61; sequence ALVTGGGTGLGKAIATTFAHLGASVAIAARRLD.

The protein belongs to the short-chain dehydrogenases/reductases (SDR) family. 2,4-dienoyl-CoA reductase subfamily.

This is an uncharacterized protein from Caenorhabditis elegans.